A 547-amino-acid polypeptide reads, in one-letter code: Glucose-6-phosphate isomerase 2 (547 aa).

E351 functions as the Proton donor in the catalytic mechanism. Residues H382 and K508 contribute to the active site.

Belongs to the GPI family.

The protein localises to the cytoplasm. The enzyme catalyses alpha-D-glucose 6-phosphate = beta-D-fructose 6-phosphate. It functions in the pathway carbohydrate biosynthesis; gluconeogenesis. Its pathway is carbohydrate degradation; glycolysis; D-glyceraldehyde 3-phosphate and glycerone phosphate from D-glucose: step 2/4. Functionally, catalyzes the reversible isomerization of glucose-6-phosphate to fructose-6-phosphate. The protein is Glucose-6-phosphate isomerase 2 of Neisseria meningitidis serogroup A / serotype 4A (strain DSM 15465 / Z2491).